A 478-amino-acid chain; its full sequence is Phosphomannomutase (478 aa).

The chain crosses the membrane as a helical span at residues 30–46; the sequence is FTPEVCARFTISFLTVM. Ser111 acts as the Phosphoserine intermediate in catalysis. Mg(2+)-binding residues include Ser111, Asp245, Asp247, and Asp249. A helical transmembrane segment spans residues 265-284; that stretch reads ILGLLCSLELAADAVAIPVS.

It belongs to the phosphohexose mutase family. It depends on Mg(2+) as a cofactor.

The protein resides in the cell membrane. The enzyme catalyses alpha-D-mannose 1-phosphate = D-mannose 6-phosphate. The protein operates within nucleotide-sugar biosynthesis; GDP-alpha-D-mannose biosynthesis; alpha-D-mannose 1-phosphate from D-fructose 6-phosphate: step 2/2. It functions in the pathway bacterial outer membrane biogenesis; LPS O-antigen biosynthesis. Functionally, involved in GDP-mannose biosynthesis which serves as the activated sugar nucleotide precursor for mannose residues in cell surface polysaccharides. This enzyme participates in synthesis of the LPS group C2 O antigen. This is Phosphomannomutase (manB) from Salmonella muenchen.